Reading from the N-terminus, the 2035-residue chain is Host cell factor 1 (2035 aa).

Ala2 carries the N-acetylalanine modification. Ser6 carries the post-translational modification Phosphoserine. Kelch repeat units lie at residues 44–89 (LIVV…GFVC), 93–140 (RLLV…RLGH), 148–194 (KCYL…ITYG), 217–265 (KLVI…TIGN), and 266–313 (KMYV…LMDT). Residues Lys105, Lys163, and Lys244 each participate in a glycyl lysine isopeptide (Lys-Gly) (interchain with G-Cter in ubiquitin) cross-link. Lys282 participates in a covalent cross-link: Glycyl lysine isopeptide (Lys-Gly) (interchain with G-Cter in SUMO2). Lys288 carries the post-translational modification N6-acetyllysine. Lys363 participates in a covalent cross-link: Glycyl lysine isopeptide (Lys-Gly) (interchain with G-Cter in ubiquitin). The Fibronectin type-III 1 domain maps to 366 to 466 (PPARVQLVRA…TTTTIQVLPT (101 aa)). The segment at 407–434 (ATATSPTPNPVPSVPANPPKSPAPAAAA) is disordered. At Ser411 the chain carries Phosphoserine. Positions 413-428 (TPNPVPSVPANPPKSP) are enriched in pro residues. The tract at residues 500 to 550 (LVTMRPASQAGKAPVTVTSLPAGVRMVVPTQSAQGTVIGSSPQMSGMAALA) is required for interaction with OGT. Omega-N-methylarginine is present on residues Arg504 and Arg524. A phosphoserine mark is found at Ser598, Ser666, and Ser669. Positions 610–722 (LKTAAAQVGT…KGPLPAGTIL (113 aa)) are interaction with SIN3A. Residues 750 to 902 (ILGISSVSPS…SLAGAGGHST (153 aa)) are interaction with ZBTB17. At Lys813 the chain carries N6-acetyllysine. The segment at 813–912 (KIITAVPKIA…SASLATPITT (100 aa)) is interaction with GABP2. 3 HCF repeat repeats span residues 1010–1035 (TLVCSNPPCETHETGTTNTATTTVVA), 1072–1097 (VRVCSNPPCETHETGTTNTATTATSN), and 1101–1126 (QHGCSNPPCETHETGTTNTATTAMSS). Residues 1158–1183 (AAQGSKSQCQTRQTSATSTTMTVMAT) form an HCF repeat 4; degenerate repeat. A Phosphoserine modification is found at Ser1205. Arg1219 is modified (omega-N-methylarginine). Residue Ser1224 is modified to Phosphoserine. HCF repeat repeat units lie at residues 1286 to 1311 (TQVCSNPPCETHETGTTNTATTSNAG) and 1314 to 1339 (QRVCSNPPCETHETGTTHTATTATSN). Disordered stretches follow at residues 1292–1371 (PPCE…TMSV), 1435–1470 (TVTSNMSSNQDPPPAASDQGEVESTQGDSVNITSSS), and 1487–1515 (VTQSTPVPGPSVPPPEELQVSPGPRQQLP). Composition is skewed to low complexity over residues 1299 to 1312 (TGTTNTATTSNAGS), 1329 to 1339 (TTHTATTATSN), and 1362 to 1371 (TTSTGTTMSV). Residues 1349–1374 (QQPPAGRPCETHQTTSTGTTMSVSVG) form an HCF repeat 7; degenerate repeat. One copy of the HCF repeat 8 repeat lies at 1414 to 1439 (QRVCSNPPCETHETGTTHTATTVTSN). At Thr1491 the chain carries Phosphothreonine. A compositionally biased stretch (pro residues) spans 1493–1502 (VPGPSVPPPE). Ser1497, Ser1507, and Ser1771 each carry phosphoserine. 2 consecutive Fibronectin type-III domains span residues 1797 to 1888 (LPPP…TCLP) and 1890 to 2006 (FPGA…TSKD). Glycyl lysine isopeptide (Lys-Gly) (interchain with G-Cter in ubiquitin) cross-links involve residues Lys1807 and Lys1808. Phosphoserine is present on Ser1838. Residues 1994-2035 (ATQVRWLQETSKDSSGTKPANKRPMSSPEMKSAPKKSKADGQ) form a disordered region. Lys2005 carries the N6-acetyllysine modification. Lys2024 participates in a covalent cross-link: Glycyl lysine isopeptide (Lys-Gly) (interchain with G-Cter in SUMO2).

As to quaternary structure, composed predominantly of six polypeptides ranging from 110 to 150 kDa and a minor 300 kDa polypeptide. The majority of N- and C-terminal cleavage products remain tightly, albeit non-covalently, associated. Interacts with POU2F1, CREB3, ZBTB17, EGR2, E2F4, CREBZF, SP1, GABP2, Sin3 HDAC complex (SIN3A, HDAC1, HDAC2, SUDS3), SAP30, SIN3B and FHL2. Component of a MLL1 complex, composed of at least the core components KMT2A/MLL1, ASH2L, HCFC1, WDR5 and RBBP5, as well as the facultative components BACC1, CHD8, DPY30, E2F6, HCFC2, HSP70, INO80C, KANSL1, LAS1L, MAX, MCRS1, MEN1, MGA, KAT8, PELP1, PHF20, PRP31, RING2, RUVBL1, RUVBL2, SENP3, TAF1, TAF4, TAF6, TAF7, TAF9 and TEX10. Component of a THAP1/THAP3-HCFC1-OGT complex that is required for the regulation of the transcriptional activity of RRM1. Interacts directly with THAP3 (via its HBM). Interacts (via the Kelch-repeat domain) with THAP1 (via the HBM); the interaction recruits HCHC1 to the RRM1. Interacts with THAP7 and THAP11 (via the HMB). Interacts directly with OGT; the interaction, which requires the HCFC1 cleavage site domain, glycosylates and promotes the proteolytic processing of HCFC1, retains OGT in the nucleus and impacts the expression of herpes simplex virus immediate early viral genes. Component of the SET1 complex, at least composed of the catalytic subunit (SETD1A or SETD1B), WDR5, WDR82, RBBP5, ASH2L, CXXC1, HCFC1 and DPY30. Component of the NSL complex at least composed of MOF/KAT8, KANSL1, KANSL2, KANSL3, MCRS1, PHF20, OGT1/OGT, WDR5 and HCFC1. Component of a complex at least composed of ZNF335, HCFC1, CCAR2, EMSY, MKI67, RBBP5, ASH2L and WDR5; the complex is formed as a result of interactions between components of a nuclear receptor-mediated transcription complex and a histone methylation complex. Within the complex interacts with ZNF335. Interacts with TET2 and TET3. Interacts with HCFC1R1. Interacts with THAP11. Interacts (via Kelch domain) with KMT2E/MLL5 isoform 3 (via HBM motif). Interacts with E2F1. Accessory scaffold component of the polycomb repressive deubiquitinase (PR-DUB) complex, at least composed of BAP1, one of ASXL1, ASXL2 or (probably) ASXL3 and one of MBD5 or MBD6; the PR-DUB core associates with a number of accessory proteins, including FOXK1, FOXK2, KDM1B, HCFC1, YY1 and OGT. Interacts with YY1 (via Gly-rich region); the interaction is direct. Interacts with BAP1 (via HBM-like motif). In terms of assembly, (Microbial infection) Associates with the VP16-induced complex; binding to HCFC1 activates the viral transcriptional activator VP16 for association with POU2F1, to form a multiprotein-DNA complex responsible for activating transcription of the viral immediate early genes. Interacts with the viral transactivator protein VP16. Proteolytically cleaved at one or several PPCE--THET sites within the HCF repeats. Further cleavage of the primary N- and C-terminal chains results in a 'trimming' and accumulation of the smaller chains. Cleavage is promoted by O-glycosylation. Post-translationally, O-glycosylated. GlcNAcylation by OGT promotes proteolytic processing. In terms of processing, ubiquitinated. Lys-1807 and Lys-1808 are ubiquitinated both via 'Lys-48'- and 'Lys-63'-linked polyubiquitin chains. BAP1 mediated deubiquitination of 'Lys-48'-linked polyubiquitin chains; deubiquitination by BAP1 does not seem to stabilize the protein. As to expression, highly expressed in fetal tissues and the adult kidney. Present in all tissues tested.

The protein localises to the cytoplasm. It is found in the nucleus. Functionally, transcriptional coregulator. Serves as a scaffold protein, bridging interactions between transcription factors, including THAP11 and ZNF143, and transcriptional coregulators. Involved in control of the cell cycle. Also antagonizes transactivation by ZBTB17 and GABP2; represses ZBTB17 activation of the p15(INK4b) promoter and inhibits its ability to recruit p300. Coactivator for EGR2 and GABP2. Tethers the chromatin modifying Set1/Ash2 histone H3 'Lys-4' methyltransferase (H3K4me) and Sin3 histone deacetylase (HDAC) complexes (involved in the activation and repression of transcription, respectively) together. Component of a THAP1/THAP3-HCFC1-OGT complex that is required for the regulation of the transcriptional activity of RRM1. As part of the NSL complex it may be involved in acetylation of nucleosomal histone H4 on several lysine residues. Recruits KMT2E/MLL5 to E2F1 responsive promoters promoting transcriptional activation and thereby facilitates G1 to S phase transition. Modulates expression of homeobox protein PDX1, perhaps acting in concert with transcription factor E2F1, thereby regulating pancreatic beta-cell growth and glucose-stimulated insulin secretion. May negatively modulate transcriptional activity of FOXO3. In terms of biological role, (Microbial infection) In case of human herpes simplex virus (HSV) infection, HCFC1 forms a multiprotein-DNA complex with the viral transactivator protein VP16 and POU2F1 thereby enabling the transcription of the viral immediate early genes. In Homo sapiens (Human), this protein is Host cell factor 1.